We begin with the raw amino-acid sequence, 71 residues long: UPF0346 protein SSU05_1322 (71 aa).

The protein belongs to the UPF0346 family.

The polypeptide is UPF0346 protein SSU05_1322 (Streptococcus suis (strain 05ZYH33)).